Reading from the N-terminus, the 699-residue chain is Fervidolysin (699 aa).

An N-terminal signal peptide occupies residues 1–21; the sequence is MRKVLLIASIVALILALFSCA. A propeptide spanning residues 22 to 149 is cleaved from the precursor; it reads NPSFEPRSKA…MYKIRKPGLN (128 aa). Ca(2+) is bound at residue Glu157. Positions 163–465 constitute a Peptidase S8 domain; that stretch reads LWGLEAIGVT…YGLVKLDAAL (303 aa). Asp190 functions as the Charge relay system in the catalytic mechanism. Asp199 is a binding site for Ca(2+). Residue His228 is the Charge relay system of the active site. Ca(2+) contacts are provided by Lys239, Asp241, Lys243, and Ile245. The Charge relay system role is filled by Ser409.

This sequence belongs to the peptidase S8 family. Undergoes auto-proteolytic processing. Once cleaved, the propeptide can remain associated with the protease and blocks its activity. The physiological activation of fervidolysin is proposed to be achieved through the stepwise removal of the propeptide accomplished by several proteolytic cleavages that may not be autolytic.

The protein resides in the cell surface. Is inhibited by phenylmethylsulfonyl fluoride and 3,4-dichloroisocoumarin. EDTA and iodoacetate (1 to 5 mM) have only little effect on the enzyme activity. Its function is as follows. Protease able to degrade keratin into peptides. Is responsible for keratinolysis by F.pennivorans, which allows this bacterium to grow on native feathers. In Fervidobacterium pennivorans, this protein is Fervidolysin.